A 382-amino-acid chain; its full sequence is Small ribosomal subunit protein bS1 homolog (382 aa).

4 consecutive S1 motif domains span residues 16-84 (GDVV…LSKR), 102-167 (KEVF…LSHR), 188-256 (GSVL…LSIK), and 273-342 (GDVL…LSMR). Position 243 is a phosphoserine (Ser-243).

It belongs to the bacterial ribosomal protein bS1 family.

In terms of biological role, plays a role in sporulation. Cannot be expressed in wild-type E.coli, does not complement an E.coli rpsA deletion. The protein is Small ribosomal subunit protein bS1 homolog of Bacillus subtilis (strain 168).